The chain runs to 427 residues: MEAKVEKIETNVVKLEIKVEAEKFDAALTKAYNKNKGKYNVPGFRKGKVPMAILKKMYGIEIFYDDAVNIAIDESYNEALKAEDIRPVDYPKVDIVEIGEGKELVYTATVTTYPEVEIGEYKGLDIKKPSYEVSEEEVEKQVKEMQSKNARIETKEEGTIADGNIAIIDFKGFVDGEAFEGGEGTDYPLEIGSGTFIDNFEEQLIGLAIGDKKEVNVTFPENYGKEELNAKPAMFEVTVKGIKAKELPELDDEFAKEVSEFDTLAELKENIKKRLEESNDERAEREFEEAVITSIIETSKIDLPEVMLTKEIDSMMKDLESRLQYQGLSLDQYMEFTGNTMEKMREFMKENAERKVKADIILESVAKAEDVKATDEQLNERALELGRMYGPKDPKKMANILLKAQKGMIEKDIIIENTLKLIKESCK.

Residues 163–248 (GNIAIIDFKG…VKGIKAKELP (86 aa)) enclose the PPIase FKBP-type domain.

It belongs to the FKBP-type PPIase family. Tig subfamily.

The protein resides in the cytoplasm. It carries out the reaction [protein]-peptidylproline (omega=180) = [protein]-peptidylproline (omega=0). Its function is as follows. Involved in protein export. Acts as a chaperone by maintaining the newly synthesized protein in an open conformation. Functions as a peptidyl-prolyl cis-trans isomerase. In Clostridium botulinum (strain Eklund 17B / Type B), this protein is Trigger factor.